Reading from the N-terminus, the 531-residue chain is 5-(hydroxymethyl)furfural oxidase (531 aa).

Residues 15 to 16 (TA), 36 to 37 (EA), W68, L94, G98, 102 to 105 (NMVV), V233, and W466 each bind FAD. H467 functions as the Proton acceptor in the catalytic mechanism. FAD is bound by residues A501 and 512 to 513 (TN).

It belongs to the GMC oxidoreductase family. Monomer. Requires FAD as cofactor.

The catalysed reaction is 5-hydroxymethylfurfural + 3 O2 + 2 H2O = 2,5-dicarboxyfuran + 3 H2O2 + 2 H(+). It carries out the reaction benzylthiol + O2 = benzothialdehyde + H2O2. In terms of biological role, involved in the degradation and detoxification of 5-(hydroxymethyl)furfural (HMF) by mediating its oxidation to furan-2,5-dicarboxylate (FDCA), a biobased platform chemical for the production of polymers. Active with a wide range of aromatic and aliphatic primary alcohols and aldehydes: acts on alcohol groups and requires the spontaneous hydration of aldehyde groups for their oxidation. To a lesser extent, is also able to catalyze the oxidation of thiols that are structurally similar to its alcohol substrates, yielding the corresponding thiocarbonyls. This is 5-(hydroxymethyl)furfural oxidase from Methylovorus sp. (strain MP688).